The primary structure comprises 151 residues: Prefoldin subunit 5 (151 aa).

Positions 15–35 (IDQLKALKEQADLEVNLLQDS) form a coiled coil.

The protein belongs to the prefoldin subunit alpha family. Heterohexamer of two PFD-alpha type and four PFD-beta type subunits forming prefoldin co-chaperone complex. Interacts with PFD6. Binds to the DELLA protein GAI.

The protein resides in the cytoplasm. Its subcellular location is the nucleus. In terms of biological role, binds specifically to cytosolic chaperonin (c-CPN) and transfers target proteins to it. Binds to nascent polypeptide chain and promotes folding in an environment in which there are many competing pathways for nonnative proteins. Together with other chaperonins, contribute to the regulation of gene expression by modulating the spliceosome function on pre-mRNA splicing post-transcriptionally by acting as a co-chaperone of Hsp90 to control levels of LSM8. Required for the biogenesis of tubulins and for subsequent microtubules (MTs) organization and dynamicity. Necessary for tolerance to NaCl salt stress. Involved in the process leading to microtubules dissociation in response to gibberellic acid (GA) probably due to the DELLA proteins-mediated translocation of the prefoldin co-chaperone complex from the cytoplasm to the nucleus. Prevents cold acclimation (e.g. 7 days at 4 degrees Celsius) in a DELLA proteins-dependent manner by promoting nuclear proteasome-mediated HY5 degradation, thus modulating the expression of several genes and reducing anthocyanin biosynthesis, but seems not involved in constitutive freezing tolerance. Contributes to the GA-dependent regulation of PIN2 trafficking at the plasma membrane, thus influencing auxin flux. The sequence is that of Prefoldin subunit 5 from Arabidopsis thaliana (Mouse-ear cress).